The primary structure comprises 583 residues: MSQAVIFKPFVSVPSSNHSQRKLQNNIINVGVKIQNRFRVVCMGMLAPRKFLQKRRKMEVFKDAADETDQKRWRGLMLEIESTGSAVPVLRQYKTDGDQGLPRDLVLGTLVRFKQLKKWNLVSEILEWLRYQNWWNFSEIDFLMLITAYGKLGNFNGAERVLSVLSKMGSTPNVISYTALMESYGRGGKCNNAEAIFRRMQSSGPEPSAITYQIILKTFVEGDKFKEAEEVFETLLDEKKSPLKPDQKMYHMMIYMYKKAGNYEKARKVFSSMVGKGVPQSTVTYNSLMSFETSYKEVSKIYDQMQRSDIQPDVVSYALLIKAYGRARREEEALSVFEEMLDAGVRPTHKAYNILLDAFAISGMVEQAKTVFKSMRRDRIFPDLWSYTTMLSAYVNASDMEGAEKFFKRIKVDGFEPNIVTYGTLIKGYAKANDVEKMMEVYEKMRLSGIKANQTILTTIMDASGRCKNFGSALGWYKEMESCGVPPDQKAKNVLLSLASTQDELEEAKELTGIRNETATIIARVYGSDDDEEGVEDISSESSDDEDEGDDDDDDARETVLYDKPQEGSLGYGSLQTEELVGL.

PPR repeat units lie at residues 138–172, 173–207, 208–242, 246–280, 281–312, 313–347, 348–382, 383–417, 418–452, and 453–487; these read SEID…GSTP, NVIS…GPEP, SAIT…KKSP, DQKM…GVPQ, STVT…DIQP, DVVS…GVRP, THKA…RIFP, DLWS…GFEP, NIVT…GIKA, and NQTI…GVPP. Positions 525–583 are disordered; it reads VYGSDDDEEGVEDISSESSDDEDEGDDDDDDARETVLYDKPQEGSLGYGSLQTEELVGL. Residues 528–556 show a composition bias toward acidic residues; sequence SDDDEEGVEDISSESSDDEDEGDDDDDDA. Over residues 557-566 the composition is skewed to basic and acidic residues; the sequence is RETVLYDKPQ.

Belongs to the PPR family. P subfamily.

The sequence is that of Pentatricopeptide repeat-containing protein At3g59040 from Arabidopsis thaliana (Mouse-ear cress).